The primary structure comprises 564 residues: Ferric/cupric reductase transmembrane component 2 (564 aa).

The next 2 membrane-spanning stretches (helical) occupy residues 10-30 (TLGS…LFLL) and 66-86 (FIFL…LVML). N-linked (GlcNAc...) asparagine glycosylation occurs at Asn106. A helical membrane pass occupies residues 110-130 (VAARLGYLSCGLFFVSYFFSL). The 116-residue stretch at 114 to 229 (LGYLSCGLFF…TCSVLIIFLI (116 aa)) folds into the Ferric oxidoreductase domain. Residues His150 and His164 each contribute to the heme site. Helical transmembrane passes span 152 to 172 (WLSV…MIFS), 184 to 204 (ISIY…ASLP), and 210 to 230 (FFEW…FLIW). 2 residues coordinate heme: His218 and His232. The FAD-binding FR-type domain occupies 254–410 (RLFRSIWNRS…DGPYGTTSNV (157 aa)). Asn261 carries N-linked (GlcNAc...) asparagine glycosylation. Residue 310–316 (HPFTLAS) coordinates FAD. N-linked (GlcNAc...) asparagine glycosylation is present at Asn350. 419–427 (LIAGGVGFS) lines the NAD(+) pocket. Residues Asn442, Asn496, and Asn548 are each glycosylated (N-linked (GlcNAc...) asparagine).

This sequence belongs to the ferric reductase (FRE) family. It depends on FAD as a cofactor. The cofactor is heme.

It is found in the cell membrane. It localises to the endoplasmic reticulum membrane. The catalysed reaction is 2 a Fe(II)-siderophore + NADP(+) + H(+) = 2 a Fe(III)-siderophore + NADPH. Functionally, metalloreductase responsible for reducing extracellular iron and copper prior to import. Catalyzes the reductive uptake of Fe(3+)-salts and Fe(3+) bound to catecholate or hydroxamate siderophores. Fe(3+) is reduced to Fe(2+), which then dissociates from the siderophore and can be imported by the high-affinity Fe(2+) transport complex in the plasma membrane. Also participates in Cu(2+) reduction and Cu(+) uptake. The sequence is that of Ferric/cupric reductase transmembrane component 2 (frp2) from Schizosaccharomyces pombe (strain 972 / ATCC 24843) (Fission yeast).